The chain runs to 497 residues: E3 ubiquitin-protein ligase CBL-C (497 aa).

Residues 7 to 145 (PQGWQWGEPR…SALFPEGKYC (139 aa)) form a 4H region. One can recognise a Cbl-PTB domain in the interval 7–321 (PQGWQWGEPR…GKNHNPDLTE (315 aa)). The EF-hand-like stretch occupies residues 146–218 (GHLYQITKGS…FEFDIFTRLF (73 aa)). Residues D199, T201, and E210 each contribute to the Ca(2+) site. The interval 219–321 (QPWPTLLKNW…GKNHNPDLTE (103 aa)) is SH2-like. R264 is a binding site for 4-O-phospho-L-tyrosine. Residues 322–350 (LCRAVLNQCIQVSQEQLQLYQAMNSTFEL) form a linker region. Phosphotyrosine; by SRC is present on Y341. The RING-type zinc finger occupies 351-390 (CKICTERDKDVRIEPCGHLLCSCCLAAWQHSDSQTCPFCR). The segment at 351-497 (CKICTERDKD…QVREGATESS (147 aa)) is interaction with RET.

Interacts with Ubiquitin-conjugating enzyme E2 UBE2D2 and UBE2D3. Interacts with EGFR (tyrosine phosphorylated). Interacts with the SH3 domain proteins LYN and CRK. Interacts (via RING-type zinc finger) with TGFB1I1 (via LIM zinc-binding domain 2); the interaction is direct and enhances the E3 activity. Interacts directly with RET (inactive) and CD2AP; dissociates from RET upon RET activation by GDNF which also increases the interaction with CD2AP suggesting dissociation as CBLC:CD2AP complex. Interacts with SRC; the interaction is enhanced when SRC is phosphorylated at 'Tyr-419'. Post-translationally, phosphorylated on multiple tyrosine residues by SRC. In terms of processing, autoubiquitinated, when phosphorylated at Tyr-341.

The enzyme catalyses S-ubiquitinyl-[E2 ubiquitin-conjugating enzyme]-L-cysteine + [acceptor protein]-L-lysine = [E2 ubiquitin-conjugating enzyme]-L-cysteine + N(6)-ubiquitinyl-[acceptor protein]-L-lysine.. With respect to regulation, phosphorylation at Tyr-341 is necessary and sufficient for the activation of E3 activity. Functionally, acts as an E3 ubiquitin-protein ligase, which accepts ubiquitin from specific E2 ubiquitin-conjugating enzymes, and then transfers it to substrates promoting their degradation by the proteasome. Functionally coupled with the E2 ubiquitin-protein ligases UB2D1, UB2D2 and UB2D3. Regulator of EGFR mediated signal transduction; upon EGF activation, ubiquitinates EGFR. Inhibits EGF stimulated MAPK1 activation. Promotes ubiquitination of SRC phosphorylated at 'Tyr-419', has the highest ubiquitin ligase activity among CBL family proteins. In collaboration with CD2AP may act as regulatory checkpoint for Ret signaling by modulating the rate of RET degradation after ligand activation; CD2AP converts it from an inhibitor to a promoter of RET degradation; the function limits the potency of GDNF on neuronal survival. In Rattus norvegicus (Rat), this protein is E3 ubiquitin-protein ligase CBL-C (Cblc).